Reading from the N-terminus, the 402-residue chain is Exodeoxyribonuclease 7 large subunit (402 aa).

The protein belongs to the XseA family. As to quaternary structure, heterooligomer composed of large and small subunits.

The protein localises to the cytoplasm. The enzyme catalyses Exonucleolytic cleavage in either 5'- to 3'- or 3'- to 5'-direction to yield nucleoside 5'-phosphates.. Functionally, bidirectionally degrades single-stranded DNA into large acid-insoluble oligonucleotides, which are then degraded further into small acid-soluble oligonucleotides. In Moorella thermoacetica (strain ATCC 39073 / JCM 9320), this protein is Exodeoxyribonuclease 7 large subunit.